The chain runs to 364 residues: Glycosyltransferase 8 domain-containing protein 1 (364 aa).

The Cytoplasmic segment spans residues 1 to 5; sequence MRRVH. The helical; Signal-anchor for type II membrane protein transmembrane segment at 6–26 threads the bilayer; the sequence is ITVILLAAVIFLLVLHHNILG. Residues 27-364 are Lumenal-facing; the sequence is LSDILKRQNS…QFSLIRRHAE (338 aa). N-linked (GlcNAc...) asparagine glycosylation is found at Asn-102, Asn-247, and Asn-255.

It belongs to the glycosyltransferase 8 family.

Its subcellular location is the membrane. This chain is Glycosyltransferase 8 domain-containing protein 1 (glt8d1), found in Xenopus laevis (African clawed frog).